Reading from the N-terminus, the 220-residue chain is 3-dehydroquinate dehydratase (220 aa).

3-dehydroquinate contacts are provided by residues serine 8, glutamate 30–arginine 32, and arginine 63. Histidine 114 (proton donor/acceptor) is an active-site residue. Lysine 140 serves as the catalytic Schiff-base intermediate with substrate. 3-dehydroquinate is bound by residues arginine 174 and glutamine 197.

The protein belongs to the type-I 3-dehydroquinase family. As to quaternary structure, homodimer.

The enzyme catalyses 3-dehydroquinate = 3-dehydroshikimate + H2O. It participates in metabolic intermediate biosynthesis; chorismate biosynthesis; chorismate from D-erythrose 4-phosphate and phosphoenolpyruvate: step 3/7. In terms of biological role, involved in the third step of the chorismate pathway, which leads to the biosynthesis of aromatic amino acids. Catalyzes the cis-dehydration of 3-dehydroquinate (DHQ) and introduces the first double bond of the aromatic ring to yield 3-dehydroshikimate. The chain is 3-dehydroquinate dehydratase from Saccharolobus solfataricus (strain ATCC 35092 / DSM 1617 / JCM 11322 / P2) (Sulfolobus solfataricus).